The chain runs to 294 residues: Probable porphobilinogen deaminase (294 aa).

At cysteine 233 the chain carries S-(dipyrrolylmethanemethyl)cysteine.

The protein belongs to the HMBS family. Dipyrromethane serves as cofactor.

The enzyme catalyses 4 porphobilinogen + H2O = hydroxymethylbilane + 4 NH4(+). It functions in the pathway porphyrin-containing compound metabolism; protoporphyrin-IX biosynthesis; coproporphyrinogen-III from 5-aminolevulinate: step 2/4. Its function is as follows. Tetrapolymerization of the monopyrrole PBG into the hydroxymethylbilane pre-uroporphyrinogen in several discrete steps. This is Probable porphobilinogen deaminase from Sulfurisphaera tokodaii (strain DSM 16993 / JCM 10545 / NBRC 100140 / 7) (Sulfolobus tokodaii).